The primary structure comprises 429 residues: Melanoma-associated antigen 11 (429 aa).

2 disordered regions span residues 1–30 and 188–215; these read METQFRRGGLGCSPASIKRKKKREDSGDFG and IFGSLSDEGSGSQEKEGPSTSPDLIDPE. The segment covering 194-209 has biased composition (polar residues); the sequence is DEGSGSQEKEGPSTSP. Residues 222-421 form the MAGE domain; it reads LHDKIIDLVH…TSYPSLYEDA (200 aa).

As to expression, expressed in tumors of several types, such as melanoma, head and neck squamous cell carcinoma, lung carcinoma and breast carcinoma. Expressed in testis, ovary, prostate, cancerous prostate, breast and adrenal tissue.

Its subcellular location is the nucleus. The protein localises to the cytoplasm. Acts as androgen receptor coregulator that increases androgen receptor activity by modulating the receptors interdomain interaction. May play a role in embryonal development and tumor transformation or aspects of tumor progression. The sequence is that of Melanoma-associated antigen 11 from Homo sapiens (Human).